The sequence spans 57 residues: Small hydrophobic protein (57 aa).

Over 1 to 8 the chain is Virion surface; that stretch reads MPAIQPPL. Residues 9–29 form a helical membrane-spanning segment; it reads YLTFLLLILLYLIITLYVWTI. The Intravirion segment spans residues 30 to 57; that stretch reads LTITYKTTVRYAALYQRSFSRWGFDQSL.

Belongs to the rubulavirus small hydrophobic protein family. In terms of assembly, interacts with host TNFRSF1A, RIPK1 and IRAK1; these interactions interfere with host NF-kappa-B activation at the level of receptor complexes. Interacts with host protein UBQLN4.

The protein resides in the virion membrane. It is found in the host cell membrane. In terms of biological role, plays a role in the inhibition of the host NF-kappa-B pathway. This inhibition occurs at the receptor level, by preventing the signaling of TNFR1 as well as IL-1R and TLR3. The polypeptide is Small hydrophobic protein (SH) (Homo sapiens (Human)).